The sequence spans 607 residues: Cytosolic Fe-S cluster assembly factor NAR1 (607 aa).

[4Fe-4S] cluster is bound by residues Cys20, Cys82, Cys85, Cys88, Cys204, and Cys259. The segment at 430-476 (KPNTGKSTNTTTTTTKSKVNPLAARRRARIANNRGKPETKSTSEVNS) is disordered. Low complexity predominate over residues 432–447 (NTGKSTNTTTTTTKSK). The [4Fe-4S] cluster site is built by Cys496 and Cys500.

The protein belongs to the NARF family.

Its function is as follows. Component of the cytosolic Fe/S protein assembly machinery. Required for maturation of extramitochondrial Fe/S proteins. May play a role in the transfer of pre-assembled Fe/S clusters to target apoproteins. The sequence is that of Cytosolic Fe-S cluster assembly factor NAR1 (NAR1) from Candida albicans (strain SC5314 / ATCC MYA-2876) (Yeast).